Consider the following 458-residue polypeptide: Histidine--tRNA ligase (458 aa).

It belongs to the class-II aminoacyl-tRNA synthetase family. Homodimer.

It is found in the cytoplasm. It catalyses the reaction tRNA(His) + L-histidine + ATP = L-histidyl-tRNA(His) + AMP + diphosphate + H(+). The polypeptide is Histidine--tRNA ligase (Azobacteroides pseudotrichonymphae genomovar. CFP2).